We begin with the raw amino-acid sequence, 130 residues long: Small ribosomal subunit protein uS9 (130 aa).

Belongs to the universal ribosomal protein uS9 family.

The polypeptide is Small ribosomal subunit protein uS9 (Nitrosomonas eutropha (strain DSM 101675 / C91 / Nm57)).